Here is a 431-residue protein sequence, read N- to C-terminus: Enolase (431 aa).

Glutamine 167 is a binding site for (2R)-2-phosphoglycerate. Glutamate 209 acts as the Proton donor in catalysis. Positions 246, 289, and 316 each coordinate Mg(2+). Residues lysine 341, arginine 370, serine 371, and lysine 392 each contribute to the (2R)-2-phosphoglycerate site. Lysine 341 functions as the Proton acceptor in the catalytic mechanism.

This sequence belongs to the enolase family. As to quaternary structure, component of the RNA degradosome, a multiprotein complex involved in RNA processing and mRNA degradation. Requires Mg(2+) as cofactor.

Its subcellular location is the cytoplasm. The protein resides in the secreted. It is found in the cell surface. The enzyme catalyses (2R)-2-phosphoglycerate = phosphoenolpyruvate + H2O. The protein operates within carbohydrate degradation; glycolysis; pyruvate from D-glyceraldehyde 3-phosphate: step 4/5. Its function is as follows. Catalyzes the reversible conversion of 2-phosphoglycerate (2-PG) into phosphoenolpyruvate (PEP). It is essential for the degradation of carbohydrates via glycolysis. The sequence is that of Enolase from Shewanella denitrificans (strain OS217 / ATCC BAA-1090 / DSM 15013).